The following is a 431-amino-acid chain: MSKVITKYDLVGDTLVLILAGGRGSRLHELTDKRAKPALYFGGNRRIIDFALSNCINSGLNRIGVITQYAAHSLLRHLQTGWSFLPQERGEFVDMLPARQQIDDNTWYRGTADSVYQNMAIIKNHYKPKYILILAGDHIYKMDYSQMILDHVNSGAKCTVGCIEVPRESAKEFGVMAVNENLKVKAFVEKPSDPPAMIGKPNSSLASMGIYVFNAEYLYETLERTVNSPQTSHDFGKDIMPMALEDEVLYAHPFDRSCMGRNTEGEIYWRDVGTLDSYWQSNIDLVSKEPQLDIYDQTWPIRGNPVQAYPSKFFYDDPACKQVDNSLIAGGCVITNASISYSVLFDNIHVNEGTLIDESVILPQVKVGKNCILKRCIVDRHVQIPDGMQIGVDPEEDSKHFRISSKGIVLVTEKMLQKMKGETVKSEDDLD.

Alpha-D-glucose 1-phosphate is bound by residues tyrosine 108, glycine 174, 189–190, and serine 207; that span reads EK.

It belongs to the bacterial/plant glucose-1-phosphate adenylyltransferase family. Homotetramer.

The catalysed reaction is alpha-D-glucose 1-phosphate + ATP + H(+) = ADP-alpha-D-glucose + diphosphate. The protein operates within glycan biosynthesis; glycogen biosynthesis. Involved in the biosynthesis of ADP-glucose, a building block required for the elongation reactions to produce glycogen. Catalyzes the reaction between ATP and alpha-D-glucose 1-phosphate (G1P) to produce pyrophosphate and ADP-Glc. In Actinobacillus succinogenes (strain ATCC 55618 / DSM 22257 / CCUG 43843 / 130Z), this protein is Glucose-1-phosphate adenylyltransferase.